Consider the following 349-residue polypeptide: Mannonate dehydratase (349 aa).

This sequence belongs to the mannonate dehydratase family. It depends on Fe(2+) as a cofactor. The cofactor is Mn(2+).

It carries out the reaction D-mannonate = 2-dehydro-3-deoxy-D-gluconate + H2O. Its pathway is carbohydrate metabolism; pentose and glucuronate interconversion. In terms of biological role, catalyzes the dehydration of D-mannonate. The protein is Mannonate dehydratase of Oceanobacillus iheyensis (strain DSM 14371 / CIP 107618 / JCM 11309 / KCTC 3954 / HTE831).